The chain runs to 296 residues: NH(3)-dependent NAD(+) synthetase (296 aa).

Position 30 to 37 (30 to 37 (GVSGGLDS)) interacts with ATP. Aspartate 36 contributes to the Mg(2+) binding site. Arginine 157 is a deamido-NAD(+) binding site. Glutamate 182 lines the Mg(2+) pocket. Residues lysine 190 and aspartate 197 each contribute to the deamido-NAD(+) site. Residues lysine 206 and serine 228 each contribute to the ATP site.

Belongs to the NAD synthetase family. As to quaternary structure, homodimer.

It carries out the reaction deamido-NAD(+) + NH4(+) + ATP = AMP + diphosphate + NAD(+) + H(+). It participates in cofactor biosynthesis; NAD(+) biosynthesis; NAD(+) from deamido-NAD(+) (ammonia route): step 1/1. Catalyzes the ATP-dependent amidation of deamido-NAD to form NAD. Uses ammonia as a nitrogen source. This chain is NH(3)-dependent NAD(+) synthetase, found in Coprothermobacter proteolyticus (strain ATCC 35245 / DSM 5265 / OCM 4 / BT).